A 320-amino-acid polypeptide reads, in one-letter code: Aspartate carbamoyltransferase catalytic subunit (320 aa).

Residues Arg58 and Thr59 each coordinate carbamoyl phosphate. Residue Lys86 participates in L-aspartate binding. Positions 108, 136, and 139 each coordinate carbamoyl phosphate. L-aspartate is bound by residues Arg169 and Arg223. Residues Gly264 and Pro265 each contribute to the carbamoyl phosphate site.

This sequence belongs to the aspartate/ornithine carbamoyltransferase superfamily. ATCase family. As to quaternary structure, heterododecamer (2C3:3R2) of six catalytic PyrB chains organized as two trimers (C3), and six regulatory PyrI chains organized as three dimers (R2).

The enzyme catalyses carbamoyl phosphate + L-aspartate = N-carbamoyl-L-aspartate + phosphate + H(+). It participates in pyrimidine metabolism; UMP biosynthesis via de novo pathway; (S)-dihydroorotate from bicarbonate: step 2/3. Its function is as follows. Catalyzes the condensation of carbamoyl phosphate and aspartate to form carbamoyl aspartate and inorganic phosphate, the committed step in the de novo pyrimidine nucleotide biosynthesis pathway. The protein is Aspartate carbamoyltransferase catalytic subunit of Cereibacter sphaeroides (strain ATCC 17025 / ATH 2.4.3) (Rhodobacter sphaeroides).